Consider the following 471-residue polypeptide: Glutamate--tRNA ligase (471 aa).

The short motif at 9 to 19 (PSPTGYLHVGG) is the 'HIGH' region element. Zn(2+) is bound by residues Cys-98, Cys-100, Cys-125, and His-127. A 'KMSKS' region motif is present at residues 237 to 241 (KLSKR). Lys-240 contributes to the ATP binding site.

It belongs to the class-I aminoacyl-tRNA synthetase family. Glutamate--tRNA ligase type 1 subfamily. As to quaternary structure, monomer. Zn(2+) serves as cofactor.

It localises to the cytoplasm. The catalysed reaction is tRNA(Glu) + L-glutamate + ATP = L-glutamyl-tRNA(Glu) + AMP + diphosphate. In terms of biological role, catalyzes the attachment of glutamate to tRNA(Glu) in a two-step reaction: glutamate is first activated by ATP to form Glu-AMP and then transferred to the acceptor end of tRNA(Glu). The polypeptide is Glutamate--tRNA ligase (Salmonella arizonae (strain ATCC BAA-731 / CDC346-86 / RSK2980)).